The sequence spans 1083 residues: Solute carrier family 12 member 7 (1083 aa).

The segment at 1-55 is disordered; that stretch reads MPTNFTVVPVEARADGAGDEAAERTEEPESPESVDQTSPTPGDGNPRENSPFINN. The Cytoplasmic portion of the chain corresponds to 1-119; the sequence is MPTNFTVVPV…RREVKAPRMG (119 aa). Residues 12–27 are compositionally biased toward basic and acidic residues; that stretch reads ARADGAGDEAAERTEE. 2 positions are modified to phosphoserine: Ser-30 and Ser-33. Thr-37 carries the phosphothreonine modification. 2 positions are modified to phosphoserine: Ser-50 and Ser-62. A discontinuously helical membrane pass occupies residues 120-142; the sequence is TFIGVYLPCLQNILGVILFLRLT. K(+) is bound by residues Asn-131 and Ile-132. Val-135 lines the chloride pocket. Residues 143-149 lie on the Extracellular side of the membrane; the sequence is WIVGAAG. The helical transmembrane segment at 150–172 threads the bilayer; it reads VMESFLIVAMCCTCTMLTAISMS. At 173–196 the chain is on the cytoplasmic side; sequence AIATNGVVPAGGSYYMISRSLGPE. The helical transmembrane segment at 197 to 225 threads the bilayer; that stretch reads FGGAVGLCFYLGTTFAGAMYILGTIEIFL. Topologically, residues 226–249 are extracellular; the sequence is TYISPSAAIFQAETADGEAAALLN. A run of 2 helical transmembrane segments spans residues 250–271 and 272–300; these read NMRV…VGVK and YVNK…KTAF. The Extracellular segment spans residues 301–419; that stretch reads APPDIPVCLL…PYVLTDIMTY (119 aa). An N-linked (GlcNAc...) (high mannose) asparagine glycan is attached at Asn-312. Residues Asn-331 and Asn-344 are each glycosylated (N-linked (GlcNAc...) (complex) asparagine). An N-linked (GlcNAc...) (high mannose) asparagine glycan is attached at Asn-360. The helical transmembrane segment at 420-440 threads the bilayer; it reads FTMLVGIYFPSVTGIMAGSNR. Residues Pro-429 and Thr-432 each coordinate K(+). A chloride-binding site is contributed by Pro-429. 2 residues coordinate chloride: Gly-433 and Ile-434. Over 441 to 450 the chain is Cytoplasmic; sequence SGDLKDAQKS. The chain crosses the membrane as a helical span at residues 451–473; it reads IPTGTILAIVTTSFIYLSCIVLF. The Extracellular portion of the chain corresponds to 474–504; that stretch reads GACIEGVVLRDKFGEALQGNLVIGMLAWPSP. The chain crosses the membrane as a helical span at residues 505-531; that stretch reads WVIVIGSFFSTCGAGLQSLTGAPRLLQ. Residues 532–554 lie on the Cytoplasmic side of the membrane; it reads AIARDGIIPFLQVFGHGKANGEP. 2 consecutive transmembrane segments (helical) span residues 555–573 and 574–598; these read TWAL…LIAS and LDSV…ACAV. Tyr-589 lines the chloride pocket. The Cytoplasmic portion of the chain corresponds to 599–612; the sequence is QTLLRTPNWRPRFK. 2 helical membrane-spanning segments follow: residues 613 to 635 and 636 to 651; these read FYHW…ICSW and YYAL…IYKY. At 652–1083 the chain is on the cytoplasmic side; the sequence is IEYRGAEKEW…GGREVITIYS (432 aa). Residues 664-680 are scissor helix; sequence GIRGLSLNAARYALLRV. Thr-973 and Thr-980 each carry phosphothreonine.

It belongs to the SLC12A transporter family. K/Cl co-transporter subfamily. In terms of assembly, homodimer; adopts a domain-swap conformation at the scissor helices connecting the transmembrane domain and C-terminal domain. Heterodimer with K-Cl cotransporter SLC12A5. Glycosylation at Asn-331 and Asn-344 is required for proper trafficking to the cell surface, and augments protein stability. Detected in proximal tubules in the kidney, in particular in basolateral membranes of intercalated cells in the cortical collecting duct.

Its subcellular location is the cell membrane. It catalyses the reaction K(+)(in) + chloride(in) = K(+)(out) + chloride(out). With respect to regulation, activated by N-ethylmaleimide (NEM). Inhibited by furosemide, DIDS and bumetanide. The inhibition is much stronger in the presence of 50 mM K(+) in the uptake medium. Inhibited by DIOA. Inhibited by WNK3. Its function is as follows. Mediates electroneutral potassium-chloride cotransport when activated by cell swelling. May mediate K(+) uptake into Deiters' cells in the cochlea and contribute to K(+) recycling in the inner ear. Important for the survival of cochlear outer and inner hair cells and the maintenance of the organ of Corti. May be required for basolateral Cl(-) extrusion in the kidney and contribute to renal acidification. This Mus musculus (Mouse) protein is Solute carrier family 12 member 7 (Slc12a7).